The chain runs to 116 residues: Immunoglobulin heavy variable 2-4 (116 aa).

Positions 1-19 (MAVLVLLFCLVTFPSCVLS) are cleaved as a signal peptide. Residues 20 to 116 (QVQLKQSGPG…DDTAIYYCAK (97 aa)) form the Ig-like domain. Cys-41 and Cys-114 are oxidised to a cystine.

This chain is Immunoglobulin heavy variable 2-4, found in Mus musculus (Mouse).